The chain runs to 335 residues: Lipoyl synthase (335 aa).

A compositionally biased stretch (polar residues) spans 1 to 13; the sequence is MTIDTNPESSTPS. Residues 1–29 are disordered; that stretch reads MTIDTNPESSTPSAPAYNPSEKQKGSAKT. [4Fe-4S] cluster is bound by residues Cys75, Cys80, Cys86, Cys101, Cys105, Cys108, and Ser315. The 219-residue stretch at 86–304 folds into the Radical SAM core domain; it reads CFGKGTATFM…EEEAYKMGFA (219 aa).

It belongs to the radical SAM superfamily. Lipoyl synthase family. It depends on [4Fe-4S] cluster as a cofactor.

It localises to the cytoplasm. It carries out the reaction [[Fe-S] cluster scaffold protein carrying a second [4Fe-4S](2+) cluster] + N(6)-octanoyl-L-lysyl-[protein] + 2 oxidized [2Fe-2S]-[ferredoxin] + 2 S-adenosyl-L-methionine + 4 H(+) = [[Fe-S] cluster scaffold protein] + N(6)-[(R)-dihydrolipoyl]-L-lysyl-[protein] + 4 Fe(3+) + 2 hydrogen sulfide + 2 5'-deoxyadenosine + 2 L-methionine + 2 reduced [2Fe-2S]-[ferredoxin]. It participates in protein modification; protein lipoylation via endogenous pathway; protein N(6)-(lipoyl)lysine from octanoyl-[acyl-carrier-protein]: step 2/2. Catalyzes the radical-mediated insertion of two sulfur atoms into the C-6 and C-8 positions of the octanoyl moiety bound to the lipoyl domains of lipoate-dependent enzymes, thereby converting the octanoylated domains into lipoylated derivatives. The polypeptide is Lipoyl synthase (Herminiimonas arsenicoxydans).